The chain runs to 716 residues: Leucine-rich repeat neuronal protein 1 (716 aa).

The first 25 residues, 1 to 25 (MARMSFVLAAYQMVLSLLMTSLTGS), serve as a signal peptide directing secretion. The 47-residue stretch at 26–72 (SLQSSECPQLCVCEIRPWFTPQSTYREATTVDCNDLRLTRIPSNLSS) folds into the LRRNT domain. The Extracellular portion of the chain corresponds to 26-631 (SLQSSECPQL…DISDQETSTA (606 aa)). N-linked (GlcNAc...) asparagine glycosylation is present at N69. 9 LRR repeats span residues 73 to 95 (DTQV…QQLF), 96 to 117 (NLTE…GLAN), 120 to 141 (QLTT…CLQD), 144 to 165 (NLQE…AFSG), 168 to 189 (NLLR…WFDS), 192 to 213 (NLEI…NFKP), 216 to 237 (NLRS…ALVG), 240 to 261 (SLES…ALQK), and 264 to 285 (NLKF…DFKN). N-linked (GlcNAc...) asparagine glycans are attached at residues N96, N106, and N117. Positions 371-424 (NPLRCDCVIHWINSNKTNIRFMEPLSMFCAMPPEYRGQQVKEVLIQDSSEQCLP) constitute an LRRCT domain. N-linked (GlcNAc...) asparagine glycosylation occurs at N385. Positions 424 to 515 (PMISHDTFPN…GADTRVVMIK (92 aa)) constitute an Ig-like C2-type domain. An intrachain disulfide couples C447 to C499. N517, N582, and N611 each carry an N-linked (GlcNAc...) asparagine glycan. Positions 525 to 617 (QVLKIYVKQT…SCVNVTTKNA (93 aa)) constitute a Fibronectin type-III domain. A helical transmembrane segment spans residues 632–652 (LAAVMGSMFAVISLASIAVYI). The Cytoplasmic segment spans residues 653-716 (AKRFKRKNYH…VDTSRSYYMW (64 aa)). Positions 691–700 (DSEKDKDGTA) are enriched in basic and acidic residues. Residues 691-716 (DSEKDKDGTADTKPTQVDTSRSYYMW) form a disordered region. The span at 702–716 (TKPTQVDTSRSYYMW) shows a compositional bias: polar residues.

The protein localises to the membrane. The chain is Leucine-rich repeat neuronal protein 1 (LRRN1) from Bos taurus (Bovine).